A 354-amino-acid chain; its full sequence is DNA replication and repair protein RecF (354 aa).

30-37 (GDNGSGKT) lines the ATP pocket.

It belongs to the RecF family.

It localises to the cytoplasm. In terms of biological role, the RecF protein is involved in DNA metabolism; it is required for DNA replication and normal SOS inducibility. RecF binds preferentially to single-stranded, linear DNA. It also seems to bind ATP. The sequence is that of DNA replication and repair protein RecF from Idiomarina loihiensis (strain ATCC BAA-735 / DSM 15497 / L2-TR).